The chain runs to 307 residues: Ribosomal RNA small subunit methyltransferase H (307 aa).

Residues 33 to 35 (GGH), Asp52, Leu83, Asp97, and Gln104 each bind S-adenosyl-L-methionine.

Belongs to the methyltransferase superfamily. RsmH family.

The protein localises to the cytoplasm. It catalyses the reaction cytidine(1402) in 16S rRNA + S-adenosyl-L-methionine = N(4)-methylcytidine(1402) in 16S rRNA + S-adenosyl-L-homocysteine + H(+). Specifically methylates the N4 position of cytidine in position 1402 (C1402) of 16S rRNA. This is Ribosomal RNA small subunit methyltransferase H from Campylobacter fetus subsp. fetus (strain 82-40).